The chain runs to 253 residues: 5-oxoprolinase subunit A (253 aa).

Belongs to the LamB/PxpA family. Forms a complex composed of PxpA, PxpB and PxpC.

It catalyses the reaction 5-oxo-L-proline + ATP + 2 H2O = L-glutamate + ADP + phosphate + H(+). Catalyzes the cleavage of 5-oxoproline to form L-glutamate coupled to the hydrolysis of ATP to ADP and inorganic phosphate. The sequence is that of 5-oxoprolinase subunit A from Bacillus cereus (strain ZK / E33L).